We begin with the raw amino-acid sequence, 336 residues long: IgLON family member 5 (336 aa).

The N-terminal stretch at 1-30 is a signal peptide; the sequence is MPPPAPGARLRLLAAAALAGLAVISRGLLS. 3 consecutive Ig-like C2-type domains span residues 33–122, 132–217, and 218–307; these read LEFN…QPYT, PARI…VNYP, and PTIT…MRLL. 4 N-linked (GlcNAc...) asparagine glycosylation sites follow: asparagine 41, asparagine 49, asparagine 67, and asparagine 137. Cysteine 54 and cysteine 112 are oxidised to a cystine. 2 cysteine pairs are disulfide-bonded: cysteine 154–cysteine 195 and cysteine 238–cysteine 291. N-linked (GlcNAc...) asparagine glycosylation is present at asparagine 288.

This sequence belongs to the immunoglobulin superfamily. IgLON family.

Its subcellular location is the secreted. The sequence is that of IgLON family member 5 (IGLON5) from Homo sapiens (Human).